A 127-amino-acid polypeptide reads, in one-letter code: 3-aminoacrylate deaminase RutC (127 aa).

It belongs to the RutC family.

It carries out the reaction (Z)-3-aminoacrylate + H2O + H(+) = 3-oxopropanoate + NH4(+). Involved in pyrimidine catabolism. Catalyzes the deamination of 3-aminoacrylate to malonic semialdehyde, a reaction that can also occur spontaneously. RutC may facilitate the reaction and modulate the metabolic fitness, rather than catalyzing essential functions. This is 3-aminoacrylate deaminase RutC from Pseudomonas savastanoi pv. phaseolicola (strain 1448A / Race 6) (Pseudomonas syringae pv. phaseolicola (strain 1448A / Race 6)).